An 89-amino-acid chain; its full sequence is MSIKLVNIGFGNIVSANRIVAIVSPESAPIKRIVTEGRDRGMLIDATYGRRTRAVVITDSDHVILSAVQPETVKQRLHTDSSEDDEEIN.

This sequence belongs to the RemA family.

The sequence is that of Putative regulatory protein Nther_1328 from Natranaerobius thermophilus (strain ATCC BAA-1301 / DSM 18059 / JW/NM-WN-LF).